The chain runs to 440 residues: Adenylosuccinate synthetase 1, chloroplastic (440 aa).

GTP contacts are provided by residues 13-19 (GDEGKGK) and 41-43 (GHT). Residue Asp14 is the Proton acceptor of the active site. Mg(2+)-binding residues include Asp14 and Gly41. IMP-binding positions include 14–17 (DEGK), 39–42 (NAGH), Thr135, Arg149, Gln230, Thr245, and Arg313. His42 serves as the catalytic Proton donor. A substrate-binding site is contributed by 309–315 (TVTRRKR). Residues Arg315 and 341–343 (KLD) each bind GTP.

It belongs to the adenylosuccinate synthetase family. Homodimer. Requires Mg(2+) as cofactor.

Its subcellular location is the plastid. The protein localises to the chloroplast. It carries out the reaction IMP + L-aspartate + GTP = N(6)-(1,2-dicarboxyethyl)-AMP + GDP + phosphate + 2 H(+). It functions in the pathway purine metabolism; AMP biosynthesis via de novo pathway; AMP from IMP: step 1/2. Plays an important role in the de novo pathway and in the salvage pathway of purine nucleotide biosynthesis. Catalyzes the first committed step in the biosynthesis of AMP from IMP. The polypeptide is Adenylosuccinate synthetase 1, chloroplastic (Ricinus communis (Castor bean)).